A 266-amino-acid polypeptide reads, in one-letter code: GTP cyclohydrolase III (266 aa).

It belongs to the archaeal-type GTP cyclohydrolase family.

The enzyme catalyses GTP + 3 H2O = 2-amino-5-formylamino-6-(5-phospho-D-ribosylamino)pyrimidin-4(3H)-one + 2 phosphate + 2 H(+). Functionally, catalyzes the formation of 2-amino-5-formylamino-6-ribofuranosylamino-4(3H)-pyrimidinone ribonucleotide monophosphate and inorganic phosphate from GTP. Also has an independent pyrophosphate phosphohydrolase activity. The sequence is that of GTP cyclohydrolase III from Methanococcus maripaludis (strain C7 / ATCC BAA-1331).